Reading from the N-terminus, the 512-residue chain is NADH-quinone oxidoreductase subunit N 2 (512 aa).

The next 14 membrane-spanning stretches (helical) occupy residues 23–43 (AFVPEIFLSGLFLLVVTIDLF), 50–70 (TIIPAVSVIGLIISGYFVYLQ), 88–108 (FAIFFKYLFIVSGVFAVLISI), 120–140 (SLGEYYSLIVAMVLGMFLMAS), 144–164 (LLMMFLSLEMVSIISYILVGY), 179–199 (VIYGSVSSGLMIYGFSIIYGL), 220–240 (ITLMLGSLLILGGFGYKAGVV), 254–274 (PTPITAYLSVGSKAAGFAMLI), 295–315 (WVTLLSVVSVVSMVLGNVVAL), 323–343 (LLAYSSIAHAGYILLGVIVAD), 351–371 (LFYLAAYTIMNIGAFFVIILI), 394–414 (AASLTIFLVSLTGLPPTVGFI), 429–449 (VFVWLAVIGVLTSVVSLYFYF), and 477–497 (LVAFLMILTVVFGLYFTPLSV).

This sequence belongs to the complex I subunit 2 family. In terms of assembly, NDH-1 is composed of 14 different subunits. Subunits NuoA, H, J, K, L, M, N constitute the membrane sector of the complex.

The protein localises to the cell inner membrane. It catalyses the reaction a quinone + NADH + 5 H(+)(in) = a quinol + NAD(+) + 4 H(+)(out). In terms of biological role, NDH-1 shuttles electrons from NADH, via FMN and iron-sulfur (Fe-S) centers, to quinones in the respiratory chain. The immediate electron acceptor for the enzyme in this species is believed to be a menaquinone. Couples the redox reaction to proton translocation (for every two electrons transferred, four hydrogen ions are translocated across the cytoplasmic membrane), and thus conserves the redox energy in a proton gradient. This Chloroherpeton thalassium (strain ATCC 35110 / GB-78) protein is NADH-quinone oxidoreductase subunit N 2.